Here is a 165-residue protein sequence, read N- to C-terminus: Endoribonuclease YbeY (165 aa).

Histidine 131, histidine 135, and histidine 141 together coordinate Zn(2+).

Belongs to the endoribonuclease YbeY family. It depends on Zn(2+) as a cofactor.

The protein localises to the cytoplasm. Functionally, single strand-specific metallo-endoribonuclease involved in late-stage 70S ribosome quality control and in maturation of the 3' terminus of the 16S rRNA. The chain is Endoribonuclease YbeY from Lachnoclostridium phytofermentans (strain ATCC 700394 / DSM 18823 / ISDg) (Clostridium phytofermentans).